The chain runs to 640 residues: Threonine--tRNA ligase (640 aa).

The TGS domain occupies methionine 1–threonine 59. A catalytic region spans residues aspartate 240 to proline 531. Zn(2+) contacts are provided by cysteine 332, histidine 383, and histidine 508.

Belongs to the class-II aminoacyl-tRNA synthetase family. As to quaternary structure, homodimer. Requires Zn(2+) as cofactor.

Its subcellular location is the cytoplasm. It carries out the reaction tRNA(Thr) + L-threonine + ATP = L-threonyl-tRNA(Thr) + AMP + diphosphate + H(+). In terms of biological role, catalyzes the attachment of threonine to tRNA(Thr) in a two-step reaction: L-threonine is first activated by ATP to form Thr-AMP and then transferred to the acceptor end of tRNA(Thr). Also edits incorrectly charged L-seryl-tRNA(Thr). This chain is Threonine--tRNA ligase, found in Thermotoga sp. (strain RQ2).